Consider the following 193-residue polypeptide: Ion-translocating oxidoreductase complex subunit A (193 aa).

Transmembrane regions (helical) follow at residues 5 to 25 (LLLF…FLGL), 39 to 59 (MGMG…AWLI), 63 to 83 (ILIP…VIAV), 102 to 122 (LLGI…VALL), 134 to 154 (ALYG…FAAI), and 171 to 191 (AIAL…NGLV).

The protein belongs to the NqrDE/RnfAE family. The complex is composed of six subunits: RsxA, RsxB, RsxC, RsxD, RsxE and RsxG.

It is found in the cell inner membrane. Part of a membrane-bound complex that couples electron transfer with translocation of ions across the membrane. Required to maintain the reduced state of SoxR. The sequence is that of Ion-translocating oxidoreductase complex subunit A from Shigella sonnei (strain Ss046).